The chain runs to 476 residues: Glutamate--tRNA ligase (476 aa).

Positions 9 to 19 match the 'HIGH' region motif; that stretch reads PSPTGTLHIGT. Positions 248 to 252 match the 'KMSKS' region motif; it reads KLSKR. ATP is bound at residue Lys251.

The protein belongs to the class-I aminoacyl-tRNA synthetase family. Glutamate--tRNA ligase type 1 subfamily. Monomer.

It is found in the cytoplasm. The catalysed reaction is tRNA(Glu) + L-glutamate + ATP = L-glutamyl-tRNA(Glu) + AMP + diphosphate. Functionally, catalyzes the attachment of glutamate to tRNA(Glu) in a two-step reaction: glutamate is first activated by ATP to form Glu-AMP and then transferred to the acceptor end of tRNA(Glu). This Prochlorococcus marinus (strain MIT 9313) protein is Glutamate--tRNA ligase.